We begin with the raw amino-acid sequence, 278 residues long: Envelope glycoprotein L (278 aa).

The N-terminal stretch at 1–30 (MCRRPDCGFSFSPGPVVLLWCCLLLPIVSS) is a signal peptide. In terms of domain architecture, gL betaherpesvirus-type spans 43–256 (VPAECPELTR…DKYYAGLPPE (214 aa)). The cysteines at positions 154 and 159 are disulfide-linked.

The protein belongs to the herpesviridae glycoprotein L (gL) family. Betaherpesvirinae gL subfamily. As to quaternary structure, interacts with glycoprotein H (gH); this interaction is necessary for the correct processing and cell surface expression of gH. Forms the envelope pentamer complex (PC) composed of gH, gL, UL128, UL130, and UL131A. The pentamer interacts with host NRP2. Forms the envelope trimer complex composed of gH, gL, and gO. The trimer interacts with host PDGFRA. The trimer also interacts with host EPHA2.

It localises to the virion membrane. It is found in the host cell membrane. The protein resides in the host Golgi apparatus. Its subcellular location is the host trans-Golgi network. Functionally, the heterodimer glycoprotein H-glycoprotein L is required for the fusion of viral and plasma membranes leading to virus entry into the host cell. Acts as a functional inhibitor of gH and maintains gH in an inhibited form. Upon binding to host integrins, gL dissociates from gH leading to activation of the viral fusion glycoproteins gB and gH. In human cytomegalovirus, forms two distincts complexes to mediate viral entry, a trimer and a pentamer at the surface of the virion envelope. The gH-gL-gO trimer is required for infection in fibroblasts by interacting with host PDGFRA, and in glioblastoma cells by interacting with host EPHA2. The gH-gL-UL128-UL130-UL131A pentamer is essential for viral entry in epithelial, endothelial and myeloid cells via interaction with host NRP2. This chain is Envelope glycoprotein L, found in Human cytomegalovirus (strain 5040) (HHV-5).